Here is a 119-residue protein sequence, read N- to C-terminus: Ribonuclease P protein component (119 aa).

Belongs to the RnpA family. Consists of a catalytic RNA component (M1 or rnpB) and a protein subunit.

The catalysed reaction is Endonucleolytic cleavage of RNA, removing 5'-extranucleotides from tRNA precursor.. In terms of biological role, RNaseP catalyzes the removal of the 5'-leader sequence from pre-tRNA to produce the mature 5'-terminus. It can also cleave other RNA substrates such as 4.5S RNA. The protein component plays an auxiliary but essential role in vivo by binding to the 5'-leader sequence and broadening the substrate specificity of the ribozyme. This Streptococcus equi subsp. equi (strain 4047) protein is Ribonuclease P protein component.